We begin with the raw amino-acid sequence, 541 residues long: Chaperonin GroEL 2 (541 aa).

ATP-binding positions include 29-32, 86-90, glycine 413, 476-478, and aspartate 492; these read TLGP, DGTTT, and NAA.

This sequence belongs to the chaperonin (HSP60) family. As to quaternary structure, forms a cylinder of 14 subunits composed of two heptameric rings stacked back-to-back. Interacts with the co-chaperonin GroES.

It is found in the cytoplasm. The catalysed reaction is ATP + H2O + a folded polypeptide = ADP + phosphate + an unfolded polypeptide.. Together with its co-chaperonin GroES, plays an essential role in assisting protein folding. The GroEL-GroES system forms a nano-cage that allows encapsulation of the non-native substrate proteins and provides a physical environment optimized to promote and accelerate protein folding. In Streptomyces coelicolor (strain ATCC BAA-471 / A3(2) / M145), this protein is Chaperonin GroEL 2.